We begin with the raw amino-acid sequence, 44 residues long: Thymosin beta (44 aa).

A disordered region spans residues M1–G44. The residue at position 2 (S2) is an N-acetylserine.

In terms of tissue distribution, expressed in regenerating axons.

It is found in the cytoplasm. The protein localises to the cytoskeleton. In terms of biological role, plays an important role in the organization of the cytoskeleton. Binds to and sequesters actin monomers (G actin) and therefore inhibits actin polymerization. May be involved in the regulation of structural plasticity in the CNS. The chain is Thymosin beta from Aplysia californica (California sea hare).